Reading from the N-terminus, the 274-residue chain is Putative pyruvate, phosphate dikinase regulatory protein (274 aa).

Position 149-156 (149-156) interacts with ADP; that stretch reads GVSRSSKT.

This sequence belongs to the pyruvate, phosphate/water dikinase regulatory protein family. PDRP subfamily.

The catalysed reaction is N(tele)-phospho-L-histidyl/L-threonyl-[pyruvate, phosphate dikinase] + ADP = N(tele)-phospho-L-histidyl/O-phospho-L-threonyl-[pyruvate, phosphate dikinase] + AMP + H(+). It carries out the reaction N(tele)-phospho-L-histidyl/O-phospho-L-threonyl-[pyruvate, phosphate dikinase] + phosphate + H(+) = N(tele)-phospho-L-histidyl/L-threonyl-[pyruvate, phosphate dikinase] + diphosphate. Functionally, bifunctional serine/threonine kinase and phosphorylase involved in the regulation of the pyruvate, phosphate dikinase (PPDK) by catalyzing its phosphorylation/dephosphorylation. The sequence is that of Putative pyruvate, phosphate dikinase regulatory protein from Rhizorhabdus wittichii (strain DSM 6014 / CCUG 31198 / JCM 15750 / NBRC 105917 / EY 4224 / RW1) (Sphingomonas wittichii).